We begin with the raw amino-acid sequence, 297 residues long: Formiminotransferase cyclodeaminase-like protein (297 aa).

The segment at 2–196 is formiminotransferase N-subdomain; the sequence is LREMLGCCKV…GVVAVGACGW (195 aa). His-89 serves as the catalytic For formimidoyltransferase activity. 178–187 lines the folate pocket; sequence GPQEVSKAKG.

The protein belongs to the formiminotransferase family. In terms of tissue distribution, expressed constitutively in roots, stems, leaves and flowers.

It localises to the golgi apparatus. The protein localises to the trans-Golgi network. It carries out the reaction (6S)-5-formyl-5,6,7,8-tetrahydrofolate + L-glutamate = N-formyl-L-glutamate + (6S)-5,6,7,8-tetrahydrofolate + H(+). The catalysed reaction is 5-formimidoyltetrahydrofolate + L-glutamate = N-formimidoyl-L-glutamate + (6S)-5,6,7,8-tetrahydrofolate. It participates in one-carbon metabolism; tetrahydrofolate interconversion. Functionally, involved in the regulation of root growth. May regulate sorting and/or transportation of trans-Golgi network (TGN) vesicles in root cap peripheral cells, thus influencing the extracellular secretion of mucilage components in the root cap. The chain is Formiminotransferase cyclodeaminase-like protein from Arabidopsis thaliana (Mouse-ear cress).